A 317-amino-acid chain; its full sequence is Ribosomal RNA small subunit methyltransferase H (317 aa).

Residues 39-41 (GGH), aspartate 59, phenylalanine 83, aspartate 104, and glutamine 111 each bind S-adenosyl-L-methionine.

This sequence belongs to the methyltransferase superfamily. RsmH family.

Its subcellular location is the cytoplasm. It catalyses the reaction cytidine(1402) in 16S rRNA + S-adenosyl-L-methionine = N(4)-methylcytidine(1402) in 16S rRNA + S-adenosyl-L-homocysteine + H(+). Functionally, specifically methylates the N4 position of cytidine in position 1402 (C1402) of 16S rRNA. This is Ribosomal RNA small subunit methyltransferase H from Paraburkholderia xenovorans (strain LB400).